A 150-amino-acid polypeptide reads, in one-letter code: Siroheme decarboxylase NirD subunit (150 aa).

Belongs to the Ahb/Nir family. Probably forms a complex composed of NirD, NirL, NirG and NirH. All proteins are required for the total conversion of siroheme to didecarboxysiroheme.

The catalysed reaction is siroheme + 2 H(+) = 12,18-didecarboxysiroheme + 2 CO2. Its pathway is porphyrin-containing compound metabolism. Its function is as follows. Involved in heme d1 biosynthesis. Catalyzes the decarboxylation of siroheme into didecarboxysiroheme. The protein is Siroheme decarboxylase NirD subunit of Pseudomonas aeruginosa (strain ATCC 15692 / DSM 22644 / CIP 104116 / JCM 14847 / LMG 12228 / 1C / PRS 101 / PAO1).